The sequence spans 90 residues: Co-chaperonin GroES (90 aa).

Belongs to the GroES chaperonin family. Heptamer of 7 subunits arranged in a ring. Interacts with the chaperonin GroEL.

It is found in the cytoplasm. Its function is as follows. Together with the chaperonin GroEL, plays an essential role in assisting protein folding. The GroEL-GroES system forms a nano-cage that allows encapsulation of the non-native substrate proteins and provides a physical environment optimized to promote and accelerate protein folding. GroES binds to the apical surface of the GroEL ring, thereby capping the opening of the GroEL channel. The chain is Co-chaperonin GroES from Fusobacterium nucleatum subsp. nucleatum (strain ATCC 25586 / DSM 15643 / BCRC 10681 / CIP 101130 / JCM 8532 / KCTC 2640 / LMG 13131 / VPI 4355).